Consider the following 525-residue polypeptide: ATP synthase subunit alpha (525 aa).

169–176 lines the ATP pocket; it reads GDRQTGKT.

The protein belongs to the ATPase alpha/beta chains family. As to quaternary structure, F-type ATPases have 2 components, CF(1) - the catalytic core - and CF(0) - the membrane proton channel. CF(1) has five subunits: alpha(3), beta(3), gamma(1), delta(1), epsilon(1). CF(0) has three main subunits: a(1), b(2) and c(9-12). The alpha and beta chains form an alternating ring which encloses part of the gamma chain. CF(1) is attached to CF(0) by a central stalk formed by the gamma and epsilon chains, while a peripheral stalk is formed by the delta and b chains.

It is found in the cell membrane. It carries out the reaction ATP + H2O + 4 H(+)(in) = ADP + phosphate + 5 H(+)(out). Its function is as follows. Produces ATP from ADP in the presence of a proton gradient across the membrane. The alpha chain is a regulatory subunit. The polypeptide is ATP synthase subunit alpha (Mesoplasma florum (strain ATCC 33453 / NBRC 100688 / NCTC 11704 / L1) (Acholeplasma florum)).